A 513-amino-acid chain; its full sequence is Probable hydrolase YhcX (513 aa).

The 199-residue stretch at 14-212 (MVIRNIEEKD…YATLMEWNNV (199 aa)) folds into the N-acetyltransferase domain. Residues 229-484 (VRICVIQYEM…EMVVIGDVDL (256 aa)) enclose the CN hydrolase domain. The active-site Proton acceptor is Glu270. The active-site Proton donor is Lys345. Residue Cys379 is the Nucleophile of the active site.

Belongs to the carbon-nitrogen hydrolase superfamily. NIT1/NIT2 family.

This is Probable hydrolase YhcX (yhcX) from Bacillus subtilis (strain 168).